The following is a 227-amino-acid chain: MLPARPEPLSVAVEETAVVVVDMQNAYASPGGYLDIAGFDISGAKAAISAIAETVEAARAAGVTVIYFQNGWDKDYVEAGGPGSPNWHKSNALKTMRKKPELQGQLLAKGGWDYALVDQLAPQPGDIVVPKPRYSGFFNSQFDSILRARGIRNLVFCGIATNVCVESTLRDGFHLEYFGILLEDATHQAGPEYVQKAAIYNVETFFGWVSTVADFRRAFAQIPPKED.

The active-site Proton acceptor is Asp22. The active site involves Lys131. The Nucleophile role is filled by Cys164.

Belongs to the isochorismatase family. RutB subfamily.

It catalyses the reaction (Z)-3-ureidoacrylate + H2O + H(+) = (Z)-3-aminoacrylate + NH4(+) + CO2. The catalysed reaction is (Z)-3-ureidoacrylate + H2O = (Z)-3-aminoacrylate + carbamate + H(+). The enzyme catalyses (Z)-2-methylureidoacrylate + H2O + H(+) = (Z)-2-methylaminoacrylate + NH4(+) + CO2. Its function is as follows. Hydrolyzes ureidoacrylate to form aminoacrylate and carbamate. The carbamate hydrolyzes spontaneously, thereby releasing one of the nitrogen atoms of the pyrimidine ring as ammonia and one of its carbon atoms as CO2. This is Ureidoacrylate amidohydrolase RutB from Azorhizobium caulinodans (strain ATCC 43989 / DSM 5975 / JCM 20966 / LMG 6465 / NBRC 14845 / NCIMB 13405 / ORS 571).